A 63-amino-acid polypeptide reads, in one-letter code: Cysteine-rich peptide clone 2 (63 aa).

The N-terminal stretch at 1-23 is a signal peptide; the sequence is MHFSGVVLILLSMTLVNFVFVET. Disulfide bonds link Cys33/Cys53, Cys38/Cys58, and Cys42/Cys60.

As to expression, expressed by the venom gland.

The protein resides in the secreted. This is Cysteine-rich peptide clone 2 from Tityus costatus (Brazilian scorpion).